The sequence spans 342 residues: Nicotinate-nucleotide--dimethylbenzimidazole phosphoribosyltransferase (342 aa).

Residue Glu-311 is the Proton acceptor of the active site.

Belongs to the CobT family.

The enzyme catalyses 5,6-dimethylbenzimidazole + nicotinate beta-D-ribonucleotide = alpha-ribazole 5'-phosphate + nicotinate + H(+). Its pathway is nucleoside biosynthesis; alpha-ribazole biosynthesis; alpha-ribazole from 5,6-dimethylbenzimidazole: step 1/2. Its function is as follows. Catalyzes the synthesis of alpha-ribazole-5'-phosphate from nicotinate mononucleotide (NAMN) and 5,6-dimethylbenzimidazole (DMB). The chain is Nicotinate-nucleotide--dimethylbenzimidazole phosphoribosyltransferase from Photobacterium profundum (strain SS9).